The sequence spans 463 residues: MGQDAFMELLRSMVGLSLCKIHLLLIAGSCLGLKVTVPSYTVHGIRGQALYLPVHYGFHTPASDIQIIWLFERSHTMPKYLLGSVNKSVVPDLEYQHKFTMMPPNASLLINPLQFTDEGNYIVKVNIQGNGTLSASQKIQVTVDDPVMKPMVQFHPASGAVEYVGNITLTCQVEGGTRLVYQWRKSGKPISINSSHSFSPQNNTLWIVPVTKEDIGNYTCLVSNPVSEMESDIIMPTIYYGPYGLQVNSDKGLKVGEVFTVDLGEAVLFDCSADSYPPNTYSWIQRSDNTTHVIKHGPHLEVASEKVAQKTADYVCCAYNNITGRRDETRFTVIITSVGLEKLAQRGKSLSPLASITGISLFLIISMCLLFLWKKYQPYKAIRQKLEGRPESEYRKAQTFSGHEDALSDFGIYEFVTFPDASGVSRMSSRSSPASDGVTGQDIHGTIYEVIQHIPEQQQENTE.

A signal peptide spans 1–32 (MGQDAFMELLRSMVGLSLCKIHLLLIAGSCLG). 3 N-linked (GlcNAc...) asparagine glycosylation sites follow: Asn86, Asn130, and Asn166. 2 consecutive Ig-like C2-type domains span residues 150-234 (PMVQ…SDII) and 236-332 (PTIY…TRFT). 2 cysteine pairs are disulfide-bonded: Cys171–Cys220 and Cys271–Cys316. The N-linked (GlcNAc...) asparagine glycan is linked to Asn321. Residues 353–373 (LASITGISLFLIISMCLLFLW) form a helical membrane-spanning segment. Over 374–463 (KKYQPYKAIR…IPEQQQENTE (90 aa)) the chain is Cytoplasmic.

Post-translationally, poly-ADP-ribosylated (PARsylated) by tankyrase TNKS during late G2 and prophase, leading to translocation to mitotic centrosomes. In terms of processing, N-glycosylated.

Its subcellular location is the golgi apparatus membrane. It localises to the cytoplasm. The protein resides in the cytoskeleton. The protein localises to the spindle. It is found in the microtubule organizing center. Its subcellular location is the centrosome. It localises to the midbody. Required during prometaphase for centrosome maturation. Following poly-ADP-ribosylation (PARsylation) by TNKS, translocates from the Golgi apparatus to mitotic centrosomes and plays a key role in the formation of robust microtubules for prompt movement of chromosomes: anchors AKAP9/CG-NAP, a scaffold protein of the gamma-tubulin ring complex and promotes centrosome maturation. This is HEPACAM family member 2 (Hepacam2) from Mus musculus (Mouse).